The following is a 426-amino-acid chain: Putative F-box/LRR-repeat protein At4g15060 (426 aa).

The 47-residue stretch at 25–71 folds into the F-box domain; that stretch reads MDKISRLPDDLLVKVLLFLPTKIAVSTSILSKRWEFLWMWLPKLEYH. 9 LRR repeats span residues 50 to 75, 80 to 106, 160 to 187, 188 to 213, 221 to 259, 265 to 290, 311 to 337, 338 to 363, and 373 to 399; these read STSILSKRWEFLWMWLPKLEYHNTNY, EQRLRSFINLNLQLHRAPIIESLRLKF, ILKLKDQILVDVPRMAYLPSLKYLLLKR, VTYKDSNSLHQLLSSCPVLKNLVVER, TLSITVSSLQRLTLKISRGGSFDELVINTPSLKYFKLTD, ETELDDDSYSYVFKDMPKLEEAHIDS, CVKVNAEEALYREGICFKQLEHLKLCP, CDSNWSKLLARLLKDSPNLRELEIKL, and DPACLENQLNYVVQSSIPSLERFTWTW.

This chain is Putative F-box/LRR-repeat protein At4g15060, found in Arabidopsis thaliana (Mouse-ear cress).